A 117-amino-acid chain; its full sequence is Ubiquitin-like protein 3 (117 aa).

In terms of domain architecture, Ubiquitin-like spans 10 to 88 (INLRLILVSG…PFGKTTVMHL (79 aa)). A lipid anchor (S-palmitoyl cysteine) is attached at C113. C114 bears the Cysteine methyl ester mark. Residue C114 is the site of S-geranylgeranyl cysteine attachment. A propeptide spans 115–117 (VIL) (removed in mature form).

It localises to the cell membrane. The protein is Ubiquitin-like protein 3 (UBL3) of Bos taurus (Bovine).